The following is a 362-amino-acid chain: Peptide chain release factor 1 (362 aa).

The residue at position 235 (Gln-235) is an N5-methylglutamine.

Belongs to the prokaryotic/mitochondrial release factor family. In terms of processing, methylated by PrmC. Methylation increases the termination efficiency of RF1.

Its subcellular location is the cytoplasm. Its function is as follows. Peptide chain release factor 1 directs the termination of translation in response to the peptide chain termination codons UAG and UAA. This is Peptide chain release factor 1 from Acinetobacter baumannii (strain AYE).